The primary structure comprises 44 residues: Omega-plectoxin-Pt1a (44 aa).

Cystine bridges form between C3/C17, C10/C23, C16/C35, C20/C42, and C25/C33. At T44 the chain carries Threonine amide. T44 carries the O-palmitoyl threonine lipid modification.

This sequence belongs to the neurotoxin 02 (plectoxin) family. 02 (plectoxin) subfamily. In terms of processing, contains 5 disulfide bonds. Post-translationally, acylation by palmitate is required for biological activity. Expressed by the venom gland.

The protein resides in the secreted. Functionally, toxin that inhibits presynaptic voltage-gated calcium channel (Cav) in Drosophila nerve terminals, most likely through specific block of the Cav2 channel (known as Dmca1A). In Plectreurys tristis (Spider), this protein is Omega-plectoxin-Pt1a.